The primary structure comprises 481 residues: Cysteine--tRNA ligase (481 aa).

Cys-43 contacts Zn(2+). The 'HIGH' region signature appears at 45 to 55 (ATVQGLPHIGH). Positions 221, 246, and 250 each coordinate Zn(2+). The 'KMSKS' region motif lies at 277-281 (KMSKS). Lys-280 contacts ATP.

This sequence belongs to the class-I aminoacyl-tRNA synthetase family. Monomer. Requires Zn(2+) as cofactor.

It is found in the cytoplasm. It carries out the reaction tRNA(Cys) + L-cysteine + ATP = L-cysteinyl-tRNA(Cys) + AMP + diphosphate. The sequence is that of Cysteine--tRNA ligase from Mycobacterium sp. (strain KMS).